We begin with the raw amino-acid sequence, 309 residues long: UPF0282 protein Msed_0584 (309 aa).

Belongs to the UPF0282 family.

This Metallosphaera sedula (strain ATCC 51363 / DSM 5348 / JCM 9185 / NBRC 15509 / TH2) protein is UPF0282 protein Msed_0584.